We begin with the raw amino-acid sequence, 312 residues long: Isethionate sulfite-lyase activating enzyme (312 aa).

The Radical SAM core domain occupies 22–309 (HDGPGIRTIV…VDETRGAVTE (288 aa)). [4Fe-4S] cluster-binding residues include Cys-36, Cys-40, Cys-43, Cys-62, Cys-65, Cys-68, Cys-72, Cys-92, Cys-95, Cys-100, and Cys-104. Residue 42–44 (WCS) coordinates S-adenosyl-L-methionine. 4Fe-4S ferredoxin-type domains are found at residues 53-82 (PQVA…VNED) and 83-115 (GTLS…YGEN). S-adenosyl-L-methionine contacts are provided by residues Gly-144, 193-195 (DVK), and His-267.

The protein belongs to the organic radical-activating enzymes family. As to quaternary structure, monomer. The cofactor is [4Fe-4S] cluster.

The catalysed reaction is glycyl-[protein] + reduced [flavodoxin] + S-adenosyl-L-methionine = glycin-2-yl radical-[protein] + semiquinone [flavodoxin] + 5'-deoxyadenosine + L-methionine + H(+). It participates in organosulfur degradation; alkanesulfonate degradation. Its function is as follows. Involved in an anaerobic respiration pathway that converts the sulfonate taurine (2-aminoethanesulfonate) to ammonia, acetate and sulfide. Catalyzes activation of the isethionate sulfite-lyase IslA under anaerobic conditions by generation of an organic free radical on a glycine residue, via a homolytic cleavage of S-adenosyl-L-methionine (SAM). This is Isethionate sulfite-lyase activating enzyme from Bilophila wadsworthia (strain 3_1_6).